We begin with the raw amino-acid sequence, 315 residues long: Ribosomal protein L11 methyltransferase (315 aa).

Residues T161, G182, D204, and N248 each contribute to the S-adenosyl-L-methionine site.

It belongs to the methyltransferase superfamily. PrmA family.

It localises to the cytoplasm. The enzyme catalyses L-lysyl-[protein] + 3 S-adenosyl-L-methionine = N(6),N(6),N(6)-trimethyl-L-lysyl-[protein] + 3 S-adenosyl-L-homocysteine + 3 H(+). Its function is as follows. Methylates ribosomal protein L11. In Shouchella clausii (strain KSM-K16) (Alkalihalobacillus clausii), this protein is Ribosomal protein L11 methyltransferase.